Reading from the N-terminus, the 547-residue chain is Ribosomal lysine N-methyltransferase set10 (547 aa).

The region spanning 17–235 (KSVEFIQSRD…KGNQLFNNYG (219 aa)) is the SET domain. Y234 serves as a coordination point for S-adenosyl-L-methionine.

The protein belongs to the class V-like SAM-binding methyltransferase superfamily. RKM1 family.

It is found in the cytoplasm. Its subcellular location is the nucleus. S-adenosyl-L-methionine-dependent protein-lysine N-methyltransferase that methylates ribosomal protein L23 (rpl23a and rpl23b). This Schizosaccharomyces pombe (strain 972 / ATCC 24843) (Fission yeast) protein is Ribosomal lysine N-methyltransferase set10 (set10).